The sequence spans 345 residues: Anthranilate phosphoribosyltransferase (345 aa).

5-phospho-alpha-D-ribose 1-diphosphate is bound by residues G84, 87–88 (GD), T92, 94–97 (NIST), 112–120 (KHGGRSVSS), and S124. Residue G84 coordinates anthranilate. S96 provides a ligand contact to Mg(2+). R170 provides a ligand contact to anthranilate. The Mg(2+) site is built by D229 and E230.

Belongs to the anthranilate phosphoribosyltransferase family. Homodimer. Requires Mg(2+) as cofactor.

The enzyme catalyses N-(5-phospho-beta-D-ribosyl)anthranilate + diphosphate = 5-phospho-alpha-D-ribose 1-diphosphate + anthranilate. It participates in amino-acid biosynthesis; L-tryptophan biosynthesis; L-tryptophan from chorismate: step 2/5. Catalyzes the transfer of the phosphoribosyl group of 5-phosphorylribose-1-pyrophosphate (PRPP) to anthranilate to yield N-(5'-phosphoribosyl)-anthranilate (PRA). This Leptothrix cholodnii (strain ATCC 51168 / LMG 8142 / SP-6) (Leptothrix discophora (strain SP-6)) protein is Anthranilate phosphoribosyltransferase.